Consider the following 170-residue polypeptide: Xanthine-guanine phosphoribosyltransferase (170 aa).

Residues Arg-41–Gly-42 and Asp-98–Thr-106 contribute to the 5-phospho-alpha-D-ribose 1-diphosphate site. Asp-99 serves as a coordination point for Mg(2+). Residue Asp-102 participates in guanine binding. Asp-102 contacts xanthine. Asp-102–Thr-106 contacts GMP.

It belongs to the purine/pyrimidine phosphoribosyltransferase family. XGPT subfamily. In terms of assembly, homotetramer. It depends on Mg(2+) as a cofactor.

It localises to the cell inner membrane. It catalyses the reaction GMP + diphosphate = guanine + 5-phospho-alpha-D-ribose 1-diphosphate. It carries out the reaction XMP + diphosphate = xanthine + 5-phospho-alpha-D-ribose 1-diphosphate. The enzyme catalyses IMP + diphosphate = hypoxanthine + 5-phospho-alpha-D-ribose 1-diphosphate. Its pathway is purine metabolism; GMP biosynthesis via salvage pathway; GMP from guanine: step 1/1. It functions in the pathway purine metabolism; XMP biosynthesis via salvage pathway; XMP from xanthine: step 1/1. Functionally, purine salvage pathway enzyme that catalyzes the transfer of the ribosyl-5-phosphate group from 5-phospho-alpha-D-ribose 1-diphosphate (PRPP) to the N9 position of the 6-oxopurines guanine and xanthine to form the corresponding ribonucleotides GMP (guanosine 5'-monophosphate) and XMP (xanthosine 5'-monophosphate), with the release of PPi. To a lesser extent, also acts on hypoxanthine. The protein is Xanthine-guanine phosphoribosyltransferase of Brucella abortus (strain 2308).